Here is a 288-residue protein sequence, read N- to C-terminus: Bifunctional protein FolD (288 aa).

Residues 166–168, S191, and I232 contribute to the NADP(+) site; that span reads GRS.

Belongs to the tetrahydrofolate dehydrogenase/cyclohydrolase family. Homodimer.

The enzyme catalyses (6R)-5,10-methylene-5,6,7,8-tetrahydrofolate + NADP(+) = (6R)-5,10-methenyltetrahydrofolate + NADPH. It catalyses the reaction (6R)-5,10-methenyltetrahydrofolate + H2O = (6R)-10-formyltetrahydrofolate + H(+). Its pathway is one-carbon metabolism; tetrahydrofolate interconversion. Its function is as follows. Catalyzes the oxidation of 5,10-methylenetetrahydrofolate to 5,10-methenyltetrahydrofolate and then the hydrolysis of 5,10-methenyltetrahydrofolate to 10-formyltetrahydrofolate. The protein is Bifunctional protein FolD of Rickettsia massiliae (strain Mtu5).